A 283-amino-acid polypeptide reads, in one-letter code: Polyamine aminopropyltransferase (283 aa).

One can recognise a PABS domain in the interval Glu2–Lys237. Gln31 provides a ligand contact to S-methyl-5'-thioadenosine. The spermidine site is built by His62 and Asp86. Residues Glu106 and Asp137–Gly138 contribute to the S-methyl-5'-thioadenosine site. The active-site Proton acceptor is Asp155. Asp155–Asp158 contacts spermidine. Pro162 is a binding site for S-methyl-5'-thioadenosine.

This sequence belongs to the spermidine/spermine synthase family. As to quaternary structure, homodimer or homotetramer.

Its subcellular location is the cytoplasm. It catalyses the reaction S-adenosyl 3-(methylsulfanyl)propylamine + putrescine = S-methyl-5'-thioadenosine + spermidine + H(+). It functions in the pathway amine and polyamine biosynthesis; spermidine biosynthesis; spermidine from putrescine: step 1/1. Functionally, catalyzes the irreversible transfer of a propylamine group from the amino donor S-adenosylmethioninamine (decarboxy-AdoMet) to putrescine (1,4-diaminobutane) to yield spermidine. This chain is Polyamine aminopropyltransferase, found in Clostridium perfringens (strain ATCC 13124 / DSM 756 / JCM 1290 / NCIMB 6125 / NCTC 8237 / Type A).